The primary structure comprises 273 residues: Acetyl-coenzyme A carboxylase carboxyl transferase subunit alpha (273 aa).

One can recognise a CoA carboxyltransferase C-terminal domain in the interval 1–244 (MKKATQSKAW…KVVLKQALDE (244 aa)).

The protein belongs to the AccA family. As to quaternary structure, acetyl-CoA carboxylase is a heterohexamer composed of biotin carboxyl carrier protein (AccB), biotin carboxylase (AccC) and two subunits each of ACCase subunit alpha (AccA) and ACCase subunit beta (AccD).

The protein localises to the cytoplasm. It carries out the reaction N(6)-carboxybiotinyl-L-lysyl-[protein] + acetyl-CoA = N(6)-biotinyl-L-lysyl-[protein] + malonyl-CoA. It functions in the pathway lipid metabolism; malonyl-CoA biosynthesis; malonyl-CoA from acetyl-CoA: step 1/1. In terms of biological role, component of the acetyl coenzyme A carboxylase (ACC) complex. First, biotin carboxylase catalyzes the carboxylation of biotin on its carrier protein (BCCP) and then the CO(2) group is transferred by the carboxyltransferase to acetyl-CoA to form malonyl-CoA. This Acinetobacter baumannii (strain AB0057) protein is Acetyl-coenzyme A carboxylase carboxyl transferase subunit alpha.